The primary structure comprises 884 residues: Telomerase reverse transcriptase (884 aa).

The region spanning 422–725 (CRNHNSYTLS…TVIQFCAMHI (304 aa)) is the Reverse transcriptase domain. Asp-530, Asp-670, and Asp-671 together coordinate Mg(2+).

This sequence belongs to the reverse transcriptase family. Telomerase subfamily. As to quaternary structure, catalytic subunit of the telomerase holoenzyme complex composed minimally of EST2 and the telomerase RNA template component.

The protein localises to the nucleus. It is found in the chromosome. It localises to the telomere. It catalyses the reaction DNA(n) + a 2'-deoxyribonucleoside 5'-triphosphate = DNA(n+1) + diphosphate. Its function is as follows. Telomerase is a ribonucleoprotein enzyme essential for the replication of chromosome termini in most eukaryotes. It elongates telomeres. It is a reverse transcriptase that adds simple sequence repeats to chromosome ends by copying a template sequence within the RNA component of the enzyme. The protein is Telomerase reverse transcriptase (EST2) of Saccharomyces cerevisiae (strain ATCC 204508 / S288c) (Baker's yeast).